The chain runs to 468 residues: Protein phosphatase ppm-1.A (468 aa).

Positions 1–23 are disordered; that stretch reads MTISRADLQIASSAEPKTHGNLN. Residues 106-381 enclose the PPM-type phosphatase domain; the sequence is RYGMSSMQGW…DNMTMVVVCF (276 aa). Mn(2+)-binding residues include aspartate 145, glycine 146, aspartate 329, and aspartate 372.

This sequence belongs to the PP2C family. It depends on Mg(2+) as a cofactor. Requires Mn(2+) as cofactor. In terms of tissue distribution, expressed in neurons of the nerve ring and motor neurons of the ventral nerve cord.

It localises to the synapse. The enzyme catalyses O-phospho-L-seryl-[protein] + H2O = L-seryl-[protein] + phosphate. It carries out the reaction O-phospho-L-threonyl-[protein] + H2O = L-threonyl-[protein] + phosphate. Its function is as follows. Probable phosphatase which regulates axon termination in ALM and PLM neurons, and synaptic branch extension and/or stabilization in PLM neurons. Plays a role in synapse formation in GABAergic DD motor neurons probably by dephosphorylating pmk-3 thereby negatively regulating a MAP kinase pathway that includes dlk-1, mkk-4 and pmk-3. The chain is Protein phosphatase ppm-1.A from Caenorhabditis elegans.